The primary structure comprises 1206 residues: DNA-directed RNA polymerase subunit beta' (1206 aa).

4 residues coordinate Zn(2+): Cys60, Cys62, Cys75, and Cys78. 3 residues coordinate Mg(2+): Asp449, Asp451, and Asp453. Zn(2+)-binding residues include Cys822, Cys896, Cys903, and Cys906.

This sequence belongs to the RNA polymerase beta' chain family. In terms of assembly, the RNAP catalytic core consists of 2 alpha, 1 beta, 1 beta' and 1 omega subunit. When a sigma factor is associated with the core the holoenzyme is formed, which can initiate transcription. Mg(2+) serves as cofactor. The cofactor is Zn(2+).

The catalysed reaction is RNA(n) + a ribonucleoside 5'-triphosphate = RNA(n+1) + diphosphate. Its function is as follows. DNA-dependent RNA polymerase catalyzes the transcription of DNA into RNA using the four ribonucleoside triphosphates as substrates. The sequence is that of DNA-directed RNA polymerase subunit beta' from Staphylococcus haemolyticus (strain JCSC1435).